We begin with the raw amino-acid sequence, 625 residues long: Probable thymidylate synthase (625 aa).

The interval 224–323 (AVKNIDGQDD…PEPPVPFTSS (100 aa)) is disordered. Positions 243–257 (EEYDDDDDDDVDDNE) are enriched in acidic residues. Composition is skewed to polar residues over residues 258–269 (QSNSMIETSANA) and 293–312 (SQAPLGSESVDTQASENVTT). Residues Arg350 and 477–478 (RR) each bind dUMP. Residue Cys497 is the Nucleophile of the active site. DUMP is bound by residues 524–527 (RSAD), Asn535, and 565–567 (HIY). Residue Asp527 coordinates (6R)-5,10-methylene-5,6,7,8-tetrahydrofolate.

In the N-terminal section; belongs to the HFCD (homo-oligomeric flavin containing Cys decarboxylase) superfamily. The protein in the C-terminal section; belongs to the thymidylate synthase family.

Its subcellular location is the cytoplasm. The enzyme catalyses dUMP + (6R)-5,10-methylene-5,6,7,8-tetrahydrofolate = 7,8-dihydrofolate + dTMP. The protein operates within pyrimidine metabolism; dTTP biosynthesis. Functionally, required for both nuclear and mitochondrial DNA synthesis. The sequence is that of Probable thymidylate synthase from Schizosaccharomyces pombe (strain 972 / ATCC 24843) (Fission yeast).